A 99-amino-acid polypeptide reads, in one-letter code: MDKVMRMSSEKGVVIFTKSSCCLSYAVQVLFQDLGVNPKIHEIDKDPECREIEKALMRLGCSKPVPAVFIGGKLVGSTNEVMSMHLSSSLVPLVKPYLC.

The Glutaredoxin domain occupies 1-99; that stretch reads MDKVMRMSSE…LVPLVKPYLC (99 aa). C21 is a [2Fe-2S] cluster binding site.

It belongs to the glutaredoxin family. CC-type subfamily.

It is found in the cytoplasm. Its function is as follows. May only reduce GSH-thiol disulfides, but not protein disulfides. The sequence is that of Monothiol glutaredoxin-S11 (GRXS11) from Arabidopsis thaliana (Mouse-ear cress).